The sequence spans 258 residues: Isoprenyl transferase 1 (258 aa).

Asp39 is an active-site residue. Mg(2+) is bound at residue Asp39. Substrate is bound by residues 40–43 (GNRR), Trp44, Arg52, His57, and 85–87 (SND). Asn88 functions as the Proton acceptor in the catalytic mechanism. Substrate is bound by residues Arg92, Arg207, and 213–215 (RLS). Mg(2+) is bound at residue Glu226.

The protein belongs to the UPP synthase family. Homodimer. It depends on Mg(2+) as a cofactor.

Functionally, catalyzes the condensation of isopentenyl diphosphate (IPP) with allylic pyrophosphates generating different type of terpenoids. In Tropheryma whipplei (strain TW08/27) (Whipple's bacillus), this protein is Isoprenyl transferase 1.